Reading from the N-terminus, the 677-residue chain is UvrABC system protein B (677 aa).

Residues 25 to 412 form the Helicase ATP-binding domain; that stretch reads QGVNGGERYQ…GGEVAQQVIR (388 aa). ATP is bound at residue 38-45; the sequence is GATGTGKT. The Beta-hairpin motif lies at 91 to 114; that stretch reads YYDYYQPEAYVPVSDTYIAKTASI. The region spanning 429–591 is the Helicase C-terminal domain; the sequence is QVDDLLGEIR…IVPTAAGKKA (163 aa). The UVR domain maps to 639–674; it reads PELIDQLEGKMKEAAKKLDFEDAANLRDRIKQLRQK.

It belongs to the UvrB family. In terms of assembly, forms a heterotetramer with UvrA during the search for lesions. Interacts with UvrC in an incision complex.

The protein resides in the cytoplasm. In terms of biological role, the UvrABC repair system catalyzes the recognition and processing of DNA lesions. A damage recognition complex composed of 2 UvrA and 2 UvrB subunits scans DNA for abnormalities. Upon binding of the UvrA(2)B(2) complex to a putative damaged site, the DNA wraps around one UvrB monomer. DNA wrap is dependent on ATP binding by UvrB and probably causes local melting of the DNA helix, facilitating insertion of UvrB beta-hairpin between the DNA strands. Then UvrB probes one DNA strand for the presence of a lesion. If a lesion is found the UvrA subunits dissociate and the UvrB-DNA preincision complex is formed. This complex is subsequently bound by UvrC and the second UvrB is released. If no lesion is found, the DNA wraps around the other UvrB subunit that will check the other stand for damage. In Parasynechococcus marenigrum (strain WH8102), this protein is UvrABC system protein B.